We begin with the raw amino-acid sequence, 371 residues long: Macrolide export protein MacA (371 aa).

Topologically, residues 1-10 are cytoplasmic; sequence MKKRKTVKKR. The helical transmembrane segment at 11–31 threads the bilayer; it reads YVIALVIVIAGLITLWRILNA. Residues 32-371 are Periplasmic-facing; sequence PVPTYQTLIV…IGEAKPGAAQ (340 aa). Positions 92 to 137 form a coiled coil; that stretch reads IDPEQAENQIKEVEATLMELRAQRQQAEAELKLARVTYSRQQRLAQ.

The protein belongs to the membrane fusion protein (MFP) (TC 8.A.1) family. As to quaternary structure, homohexamer. Part of the tripartite efflux system MacAB-TolC, which is composed of an inner membrane transporter, MacB, a periplasmic membrane fusion protein, MacA, and an outer membrane component, TolC. The complex forms a large protein conduit and can translocate molecules across both the inner and outer membranes. MacA interacts with MacB and TolC.

It is found in the cell inner membrane. Its function is as follows. Part of the tripartite efflux system MacAB-TolC. MacA stimulates the ATPase activity of MacB by promoting the closed ATP-bound state of MacB, increases the capacity of MacB to bind macrolides such as erythromycin, and provides a physical link between MacB and TolC. Confers resistance against macrolides. This is Macrolide export protein MacA (macA) from Escherichia coli O157:H7.